The primary structure comprises 301 residues: 1,5-anhydro-D-fructose reductase (301 aa).

D35 contributes to the NADP(+) binding site. Residue Y40 is the Proton donor of the active site. A substrate-binding site is contributed by H102. Residues Q175 and 246 to 258 (IPKSVTPSRIREN) each bind NADP(+).

It belongs to the aldo/keto reductase family. Monomer.

Its subcellular location is the cytoplasm. The catalysed reaction is 1,5-anhydro-D-glucitol + NADP(+) = 1,5-anhydro-D-fructose + NADPH + H(+). Its activity is regulated as follows. Inhibited by p-chloromercuribenzoic acid and alkyliodines. Catalyzes the NADPH-dependent reduction of 1,5-anhydro-D-fructose (AF) to 1,5-anhydro-D-glucitol. The protein is 1,5-anhydro-D-fructose reductase (Akr1e2) of Mus musculus (Mouse).